A 376-amino-acid chain; its full sequence is Glutamate 5-kinase (376 aa).

An ATP-binding site is contributed by lysine 10. The substrate site is built by serine 50, aspartate 137, and asparagine 149. 169 to 170 (TD) provides a ligand contact to ATP. Positions 275–353 (RGRLVLDAGA…AEIAGVLGFM (79 aa)) constitute a PUA domain.

It belongs to the glutamate 5-kinase family.

It localises to the cytoplasm. The catalysed reaction is L-glutamate + ATP = L-glutamyl 5-phosphate + ADP. The protein operates within amino-acid biosynthesis; L-proline biosynthesis; L-glutamate 5-semialdehyde from L-glutamate: step 1/2. Functionally, catalyzes the transfer of a phosphate group to glutamate to form L-glutamate 5-phosphate. This is Glutamate 5-kinase from Alcanivorax borkumensis (strain ATCC 700651 / DSM 11573 / NCIMB 13689 / SK2).